The chain runs to 283 residues: Heavy metal-associated isoprenylated plant protein 3 (283 aa).

Residues 1 to 22 (MGEKKNEGDNKKKGGDNKKKNE) are compositionally biased toward basic and acidic residues. Residues 1-26 (MGEKKNEGDNKKKGGDNKKKNETPSI) are disordered. 2 consecutive HMA domains span residues 25 to 88 (SITV…KKKV) and 132 to 195 (VTTA…KRAV). Positions 36 and 39 each coordinate Zn(2+). The span at 82–129 (EKTKKKVDLVSPQPKKEKEKENKNKNDEDKKKSEEKKKPDNNDKKPKE) shows a compositional bias: basic and acidic residues. The tract at residues 82 to 131 (EKTKKKVDLVSPQPKKEKEKENKNKNDEDKKKSEEKKKPDNNDKKPKETP) is disordered. 2 residues coordinate Zn(2+): Cys143 and Cys146. Residues 198–230 (VPPKKEKDKENGNENGEKKKGGGGDGGGKEKTG) show a composition bias toward basic and acidic residues. Positions 198-238 (VPPKKEKDKENGNENGEKKKGGGGDGGGKEKTGNKGGGEGV) are disordered. Cys280 is modified (cysteine methyl ester). The S-farnesyl cysteine moiety is linked to residue Cys280. A propeptide spans 281 to 283 (VVM) (removed in mature form).

It belongs to the HIPP family.

It localises to the nucleus. The protein localises to the nucleolus. It is found in the cytoplasm. In terms of biological role, heavy-metal-binding protein. Binds high amounts of zinc. May act as an upstream regulator of the salicylate-dependent pathogen response. Involved in abiotic stress responses, and seed and flower development. The protein is Heavy metal-associated isoprenylated plant protein 3 of Arabidopsis thaliana (Mouse-ear cress).